The following is a 453-amino-acid chain: Homogentisate 1,2-dioxygenase (453 aa).

A disordered region spans residues 1–42; that stretch reads MLEKAEKQRRAGSGQQRAAGYMPGFGNDFETESLPGALPQGQ. His-306 serves as the catalytic Proton acceptor. 2 residues coordinate Fe cation: His-349 and Glu-355. Homogentisate is bound by residues Tyr-364 and His-385. A Fe cation-binding site is contributed by His-385.

Belongs to the homogentisate dioxygenase family. In terms of assembly, hexamer; dimer of trimers. Fe cation serves as cofactor.

The catalysed reaction is homogentisate + O2 = 4-maleylacetoacetate + H(+). It functions in the pathway amino-acid degradation; L-phenylalanine degradation; acetoacetate and fumarate from L-phenylalanine: step 4/6. Its function is as follows. Involved in the catabolism of homogentisate (2,5-dihydroxyphenylacetate or 2,5-OH-PhAc), a central intermediate in the degradation of phenylalanine and tyrosine. Catalyzes the oxidative ring cleavage of the aromatic ring of homogentisate to yield maleylacetoacetate. This is Homogentisate 1,2-dioxygenase from Rhizobium meliloti (strain 1021) (Ensifer meliloti).